Here is a 434-residue protein sequence, read N- to C-terminus: Probable G-protein coupled receptor B0563.6 (434 aa).

The N-linked (GlcNAc...) asparagine glycan is linked to N12. 2 consecutive transmembrane segments (helical) span residues 30–50 (VLPC…MVLA) and 65–85 (LAVA…TEYL). The N-linked (GlcNAc...) asparagine glycan is linked to N88. 2 consecutive transmembrane segments (helical) span residues 105–125 (LMLT…VALS) and 147–167 (ATRA…PYAI). An N-linked (GlcNAc...) asparagine glycan is attached at N181. A run of 2 helical transmembrane segments spans residues 208–228 (ILRF…MIAF) and 258–278 (GGTV…LLLI). N-linked (GlcNAc...) asparagine glycans are attached at residues N429 and N430.

The protein belongs to the G-protein coupled receptor 1 family.

It localises to the cell membrane. Functionally, not known. Putative receptor. This chain is Probable G-protein coupled receptor B0563.6, found in Caenorhabditis elegans.